We begin with the raw amino-acid sequence, 507 residues long: Probable Xaa-Pro aminopeptidase HCBG_01484 (507 aa).

Positions 283, 294, 431, and 469 each coordinate Mn(2+).

It belongs to the peptidase M24B family. Mn(2+) serves as cofactor.

The enzyme catalyses Release of any N-terminal amino acid, including proline, that is linked to proline, even from a dipeptide or tripeptide.. Catalyzes the removal of a penultimate prolyl residue from the N-termini of peptides. This is Probable Xaa-Pro aminopeptidase HCBG_01484 from Ajellomyces capsulatus (strain G186AR / H82 / ATCC MYA-2454 / RMSCC 2432) (Darling's disease fungus).